A 302-amino-acid polypeptide reads, in one-letter code: Sulfate adenylyltransferase subunit 2 (302 aa).

The protein belongs to the PAPS reductase family. CysD subfamily. Heterodimer composed of CysD, the smaller subunit, and CysN.

The catalysed reaction is sulfate + ATP + H(+) = adenosine 5'-phosphosulfate + diphosphate. The protein operates within sulfur metabolism; hydrogen sulfide biosynthesis; sulfite from sulfate: step 1/3. With CysN forms the ATP sulfurylase (ATPS) that catalyzes the adenylation of sulfate producing adenosine 5'-phosphosulfate (APS) and diphosphate, the first enzymatic step in sulfur assimilation pathway. APS synthesis involves the formation of a high-energy phosphoric-sulfuric acid anhydride bond driven by GTP hydrolysis by CysN coupled to ATP hydrolysis by CysD. The polypeptide is Sulfate adenylyltransferase subunit 2 (Erwinia tasmaniensis (strain DSM 17950 / CFBP 7177 / CIP 109463 / NCPPB 4357 / Et1/99)).